We begin with the raw amino-acid sequence, 243 residues long: UPF0758 protein alr2351 (243 aa).

Residues 113-235 enclose the MPN domain; the sequence is PIDSPVAAVA…HQSLREITTL (123 aa). Zn(2+)-binding residues include histidine 184, histidine 186, and aspartate 197. The short motif at 184–197 is the JAMM motif element; the sequence is HNHPSGNVEPSPED.

The protein belongs to the UPF0758 family.

The sequence is that of UPF0758 protein alr2351 from Nostoc sp. (strain PCC 7120 / SAG 25.82 / UTEX 2576).